The chain runs to 349 residues: MSLANHTFSNPSRVLQRNESLFTNKNILVAGNIDDEYPLQLQALANSSTFCFSDYRYYSVLKDKLTTSEVHFTDNYQGETKFDLLLIFLPKAKQETLYLLANLTPHLQPGASIILVGEKKCGIKSADSLLASYSNRINMIDSARHCSILHAELNQPVNAFTQSQWIKTYPLNINNTELQICSLPGVFSYGELDKGSELLLQNLPDKMSGRVLDFGCGAGVIACYVLKKHPQLSVDLVDINAFALASAKLSLQSNQLEGNVFPSNVFSDIKEKYNILLSNPPFHSGKNTDYTAAETFINQSTNHLKSKGKLSIVANRFLNYEGLLFKAFSNVKIDQESNKFKVLSCITKT.

Belongs to the methyltransferase superfamily. RsmC family. As to quaternary structure, monomer.

It localises to the cytoplasm. The catalysed reaction is guanosine(1207) in 16S rRNA + S-adenosyl-L-methionine = N(2)-methylguanosine(1207) in 16S rRNA + S-adenosyl-L-homocysteine + H(+). In terms of biological role, specifically methylates the guanine in position 1207 of 16S rRNA in the 30S particle. In Psychromonas ingrahamii (strain DSM 17664 / CCUG 51855 / 37), this protein is Ribosomal RNA small subunit methyltransferase C.